Consider the following 167-residue polypeptide: MAPVCVLVGPPGSGKTTVGQALAELLGVEFRDTDLDVEATAGKPISEIFIDEGEAHFRALEREAVAAQLASATGVLALGGGAVLAEQTRAALVGHTVVYLSVELPDAVRRVGLGAGRPLLAVNPRATLKHLLDQRRPYYAAVATATVVTDGRTPEQLAVEVAALLAA.

12–17 serves as a coordination point for ATP; sequence GSGKTT. Thr-16 contributes to the Mg(2+) binding site. Positions 34, 58, and 80 each coordinate substrate. Arg-117 is an ATP binding site. A substrate-binding site is contributed by Arg-135. ATP is bound at residue Arg-152.

It belongs to the shikimate kinase family. Monomer. Mg(2+) is required as a cofactor.

The protein resides in the cytoplasm. It carries out the reaction shikimate + ATP = 3-phosphoshikimate + ADP + H(+). It participates in metabolic intermediate biosynthesis; chorismate biosynthesis; chorismate from D-erythrose 4-phosphate and phosphoenolpyruvate: step 5/7. Functionally, catalyzes the specific phosphorylation of the 3-hydroxyl group of shikimic acid using ATP as a cosubstrate. This Salinispora arenicola (strain CNS-205) protein is Shikimate kinase.